The chain runs to 409 residues: Microfibrillar-associated protein 3-like (409 aa).

The N-terminal stretch at 1-28 (MGLQKSHLTVCLPPSVPFLILVSTLATA) is a signal peptide. The Extracellular portion of the chain corresponds to 29–148 (KSVTNSTLNG…TLRVIFTSGD (120 aa)). N-linked (GlcNAc...) asparagine glycans are attached at residues Asn33, Asn37, Asn67, Asn111, and Asn135. The Ig-like C2-type domain maps to 47-141 (PVIIARTDHI…GTINNTVTLR (95 aa)). An intrachain disulfide couples Cys68 to Cys125. A helical membrane pass occupies residues 149–169 (MGVYYMVVCLVAFTIVMILNI). Topologically, residues 170–409 (TRLCMMSSHL…NTCIIYESHV (240 aa)) are cytoplasmic. Tyr287 carries the phosphotyrosine modification. 4 positions are modified to phosphoserine: Ser298, Ser303, Ser306, and Ser307. The segment at 319-395 (VSVHPQSKRD…AHLETTEPAV (77 aa)) is disordered. The segment covering 325 to 340 (SKRDHVDDQEGGHFEV) has biased composition (basic and acidic residues). Over residues 356–373 (TAEPSTDITTTELTSEET) the composition is skewed to low complexity.

It localises to the cell membrane. The protein localises to the nucleus. Its subcellular location is the cytoplasm. In terms of biological role, may participate in the nuclear signaling of EGFR and MAPK1/ERK2. This is Microfibrillar-associated protein 3-like (Mfap3l) from Mus musculus (Mouse).